A 98-amino-acid chain; its full sequence is Major carboxysome shell protein CsoS1A (98 aa).

Residues 8–93 (ALGMIETRGL…VHSEVENILP (86 aa)) form the BMC domain.

Belongs to the bacterial microcompartments protein family. CsoS1 subfamily. As to quaternary structure, homohexamer with a small central pore; the concave side is mostly positive electrostatic potential, whereas the convex side is mostly negative electrostatic potential. Forms a CsoS2-CsoS1-RuBisCO complex. Interacts with the N-terminus (residues 1-136) of RuBisCO (CbbL).

The protein resides in the carboxysome. The major shell protein of the carboxysome, a polyhedral inclusion where RuBisCO (ribulose bisphosphate carboxylase, ccbL-ccbS) is sequestered. Assembles into hexamers which make sheets that form the facets of the polyhedral carboxysome. The shell probably limits the diffusion of CO(2) into and out of the carboxysome. Molecular modeling shows the central pore of this protein is selectively permeable to anions such as HCO(3) rather than CO(2) or O(2). There are estimated to be 2970 CsoS1A/CsoS1C proteins per carboxysome (the proteins differ by only 1 residue). In terms of biological role, unlike beta-carboxysomes, alpha-carboxysomes (Cb) can form without cargo protein. CsoS2 is essential for Cb formation and is also capable of targeting foreign proteins to the Cb. The Cb shell assembles with the aid of CsoS2; CsoS1A, CsoS1B and CsoS1C form the majority of the shell while CsoS4A and CsoS4B form vertices. CsoS1D forms pseudohexamers that probably control metabolite flux into and out of the shell. The chain is Major carboxysome shell protein CsoS1A from Halothiobacillus neapolitanus (strain ATCC 23641 / c2) (Thiobacillus neapolitanus).